We begin with the raw amino-acid sequence, 398 residues long: 1-deoxy-D-xylulose 5-phosphate reductoisomerase (398 aa).

8 residues coordinate NADPH: Thr-10, Gly-11, Ser-12, Ile-13, Gly-36, Lys-37, Asn-38, and Asn-124. A 1-deoxy-D-xylulose 5-phosphate-binding site is contributed by Lys-125. Glu-126 is a binding site for NADPH. A Mn(2+)-binding site is contributed by Asp-150. Positions 151, 152, 186, and 209 each coordinate 1-deoxy-D-xylulose 5-phosphate. A Mn(2+)-binding site is contributed by Glu-152. Gly-215 lines the NADPH pocket. 1-deoxy-D-xylulose 5-phosphate is bound by residues Ser-222, Asn-227, Lys-228, and Glu-231. Glu-231 is a Mn(2+) binding site.

It belongs to the DXR family. As to quaternary structure, homodimer. The cofactor is Mg(2+). Mn(2+) is required as a cofactor.

It carries out the reaction 2-C-methyl-D-erythritol 4-phosphate + NADP(+) = 1-deoxy-D-xylulose 5-phosphate + NADPH + H(+). It participates in isoprenoid biosynthesis; isopentenyl diphosphate biosynthesis via DXP pathway; isopentenyl diphosphate from 1-deoxy-D-xylulose 5-phosphate: step 1/6. Its function is as follows. Catalyzes the NADPH-dependent rearrangement and reduction of 1-deoxy-D-xylulose-5-phosphate (DXP) to 2-C-methyl-D-erythritol 4-phosphate (MEP). The sequence is that of 1-deoxy-D-xylulose 5-phosphate reductoisomerase from Salmonella paratyphi A (strain ATCC 9150 / SARB42).